Consider the following 704-residue polypeptide: UvrABC system protein B (704 aa).

Residues 35-188 (ERINNGEKDV…DDLLRKFVSM (154 aa)) form the Helicase ATP-binding domain. 48 to 55 (GATGTGKS) contributes to the ATP binding site. Residues 101–124 (YYDYYQPEAYVAQTDTFIEKDSSI) carry the Beta-hairpin motif. The region spanning 438-604 (QIDDLLGEIR…PLRKKIADIT (167 aa)) is the Helicase C-terminal domain. The region spanning 659–694 (VGMIAQLTEQMHGAAAELQFEVAARIRDEVSELKKE) is the UVR domain.

Belongs to the UvrB family. Forms a heterotetramer with UvrA during the search for lesions. Interacts with UvrC in an incision complex.

It is found in the cytoplasm. Its function is as follows. The UvrABC repair system catalyzes the recognition and processing of DNA lesions. A damage recognition complex composed of 2 UvrA and 2 UvrB subunits scans DNA for abnormalities. Upon binding of the UvrA(2)B(2) complex to a putative damaged site, the DNA wraps around one UvrB monomer. DNA wrap is dependent on ATP binding by UvrB and probably causes local melting of the DNA helix, facilitating insertion of UvrB beta-hairpin between the DNA strands. Then UvrB probes one DNA strand for the presence of a lesion. If a lesion is found the UvrA subunits dissociate and the UvrB-DNA preincision complex is formed. This complex is subsequently bound by UvrC and the second UvrB is released. If no lesion is found, the DNA wraps around the other UvrB subunit that will check the other stand for damage. The chain is UvrABC system protein B from Pseudarthrobacter chlorophenolicus (strain ATCC 700700 / DSM 12829 / CIP 107037 / JCM 12360 / KCTC 9906 / NCIMB 13794 / A6) (Arthrobacter chlorophenolicus).